Consider the following 48-residue polypeptide: Entericidin B (48 aa).

An N-terminal signal peptide occupies residues 1–21 (MVKKTIAAIFSVLVLSSVLTA). The N-palmitoyl cysteine moiety is linked to residue cysteine 22. Cysteine 22 carries the S-diacylglycerol cysteine lipid modification.

The protein belongs to the EcnA/EcnB lipoprotein family.

It localises to the cell membrane. Plays a role in the bacteriolysis. Is activated under conditions of high osmolarity by the factor sigma S. Entericidin A functions as an antidote. This is Entericidin B (ecnB) from Citrobacter freundii.